A 340-amino-acid chain; its full sequence is Fructose-1,6-bisphosphatase, cytosolic (340 aa).

Positions 71, 100, 121, 123, and 124 each coordinate Mg(2+). Substrate is bound by residues 124–127, N215, Y247, Y267, and K277; that span reads DGSS. Mg(2+) is bound at residue E283.

It belongs to the FBPase class 1 family. Mg(2+) serves as cofactor.

It is found in the cytoplasm. The catalysed reaction is beta-D-fructose 1,6-bisphosphate + H2O = beta-D-fructose 6-phosphate + phosphate. The chain is Fructose-1,6-bisphosphatase, cytosolic from Solanum tuberosum (Potato).